The primary structure comprises 748 residues: CCR4-NOT transcription complex subunit 10-B (748 aa).

Over residues 1–16 the composition is skewed to basic and acidic residues; it reads MAADKAGEQGAEKHEG. Disordered stretches follow at residues 1–25, 483–524, and 605–634; these read MAADKAGEQGAEKHEGSANCSGISD, KQEN…PPSS, and VSLGVSSNEQEQGSDKGENEPMESAGKQIP. Composition is skewed to polar residues over residues 487–509 and 605–615; these read GSKASSQTVNTDSSGESSDVCSN and VSLGVSSNEQE.

Belongs to the CNOT10 family. Component of the CCR4-NOT complex. cnot10 and cnot11 form a subcomplex docked to the cnot1 scaffold.

Its subcellular location is the cytoplasm. The protein resides in the nucleus. Its function is as follows. Component of the CCR4-NOT complex which is one of the major cellular mRNA deadenylases and is linked to various cellular processes including bulk mRNA degradation, miRNA-mediated repression, translational repression during translational initiation and general transcription regulation. Additional complex functions may be a consequence of its influence on mRNA expression. Is not required for association of CNOT7 to the CCR4-NOT complex. This Xenopus laevis (African clawed frog) protein is CCR4-NOT transcription complex subunit 10-B (cnot10-b).